The chain runs to 438 residues: Ornithine aminotransferase car2 (438 aa).

Lysine 275 bears the N6-(pyridoxal phosphate)lysine mark.

The protein belongs to the class-III pyridoxal-phosphate-dependent aminotransferase family. Pyridoxal 5'-phosphate is required as a cofactor.

The protein resides in the cytoplasm. Its subcellular location is the nucleus. The enzyme catalyses a 2-oxocarboxylate + L-ornithine = L-glutamate 5-semialdehyde + an L-alpha-amino acid. The protein operates within amino-acid biosynthesis; L-proline biosynthesis; L-glutamate 5-semialdehyde from L-ornithine: step 1/1. This is Ornithine aminotransferase car2 (car2) from Schizosaccharomyces pombe (strain 972 / ATCC 24843) (Fission yeast).